The following is an 881-amino-acid chain: Protein P (881 aa).

The segment at 1 to 184 (MHPFYQLFRN…GKPYSWEHRQ (184 aa)) is terminal protein domain (TP). The spacer stretch occupies residues 185 to 384 (LEQHNGQQHK…YCLHHIVSSI (200 aa)). The interval 263 to 351 (IPCESKAPSE…PAGICRGTES (89 aa)) is disordered. Polar residues-rich tracts occupy residues 270-279 (PSEQQQSSLR) and 287-314 (NQIQ…IQSG). Residues 326 to 340 (FERHTPSFDNEKSDR) are compositionally biased toward basic and acidic residues. The tract at residues 385-726 (DDWGPCTFDG…YGELWPVARQ (342 aa)) is polymerase/reverse transcriptase domain (RT). A Reverse transcriptase domain is found at 395–636 (DVTIRSPRTP…HTLHFMGYTI (242 aa)). Mg(2+) is bound by residues Asp467, Asp587, and Asp588.

The protein belongs to the hepadnaviridae P protein family.

It catalyses the reaction DNA(n) + a 2'-deoxyribonucleoside 5'-triphosphate = DNA(n+1) + diphosphate. The enzyme catalyses Endonucleolytic cleavage to 5'-phosphomonoester.. Activated by host HSP70 and HSP40 in vitro to be able to bind the epsilon loop of the pgRNA. Because deletion of the RNase H region renders the protein partly chaperone-independent, the chaperones may be needed indirectly to relieve occlusion of the RNA-binding site by this domain. Inhibited by several reverse-transcriptase inhibitors: Lamivudine, Adefovir and Entecavir. Functionally, multifunctional enzyme that converts the viral RNA genome into dsDNA in viral cytoplasmic capsids. This enzyme displays a DNA polymerase activity that can copy either DNA or RNA templates, and a ribonuclease H (RNase H) activity that cleaves the RNA strand of RNA-DNA heteroduplexes in a partially processive 3'- to 5'-endonucleasic mode. Neo-synthesized pregenomic RNA (pgRNA) are encapsidated together with the P protein, and reverse-transcribed inside the nucleocapsid. Initiation of reverse-transcription occurs first by binding the epsilon loop on the pgRNA genome, and is initiated by protein priming, thereby the 5'-end of (-)DNA is covalently linked to P protein. Partial (+)DNA is synthesized from the (-)DNA template and generates the relaxed circular DNA (RC-DNA) genome. After budding and infection, the RC-DNA migrates in the nucleus, and is converted into a plasmid-like covalently closed circular DNA (cccDNA). The activity of P protein does not seem to be necessary for cccDNA generation, and is presumably released from (+)DNA by host nuclear DNA repair machinery. This chain is Protein P, found in Ground squirrel hepatitis virus (strain 27) (GSHV).